The following is a 654-amino-acid chain: Macrolide export ATP-binding/permease protein MacB (654 aa).

Positions 6 to 244 (IELRGLRREF…RAGDAPTRQP (239 aa)) constitute an ABC transporter domain. 42 to 49 (GASGSGKS) lines the ATP pocket. 4 helical membrane-spanning segments follow: residues 278–298 (FLTMLGIIIGIASVVFVVAVG), 527–547 (LTLMIAAIAVISLVVGGIGVM), 584–604 (VVCLIGGGLGVGVAFGLAALF), and 619–639 (SIAAAFVCSTGIGIVFGYLPA).

Belongs to the ABC transporter superfamily. Macrolide exporter (TC 3.A.1.122) family. As to quaternary structure, homodimer.

The protein localises to the cell inner membrane. Functionally, non-canonical ABC transporter that contains transmembrane domains (TMD), which form a pore in the inner membrane, and an ATP-binding domain (NBD), which is responsible for energy generation. Confers resistance against macrolides. The sequence is that of Macrolide export ATP-binding/permease protein MacB from Rhodopseudomonas palustris (strain HaA2).